Here is a 67-residue protein sequence, read N- to C-terminus: DNA-directed RNA polymerase subunit omega (67 aa).

It belongs to the RNA polymerase subunit omega family. The RNAP catalytic core consists of 2 alpha, 1 beta, 1 beta' and 1 omega subunit. When a sigma factor is associated with the core the holoenzyme is formed, which can initiate transcription.

The enzyme catalyses RNA(n) + a ribonucleoside 5'-triphosphate = RNA(n+1) + diphosphate. Functionally, promotes RNA polymerase assembly. Latches the N- and C-terminal regions of the beta' subunit thereby facilitating its interaction with the beta and alpha subunits. This chain is DNA-directed RNA polymerase subunit omega, found in Albidiferax ferrireducens (strain ATCC BAA-621 / DSM 15236 / T118) (Rhodoferax ferrireducens).